The sequence spans 115 residues: T cell receptor beta variable 7-4 (115 aa).

Residues 1-21 (MGTRLLCWVVLGFLGTDHTGA) form the signal peptide. One can recognise an Ig-like domain in the interval 22–115 (GVSQSPRYKV…SAVYLCASSL (94 aa)). C42 and C111 are oxidised to a cystine. The interval 67-97 (YSQSDAQRDKSGRPSGRFSAERPERSVSTLK) is disordered.

As to quaternary structure, alpha-beta TR is a heterodimer composed of an alpha and beta chain; disulfide-linked. The alpha-beta TR is associated with the transmembrane signaling CD3 coreceptor proteins to form the TR-CD3 (TcR or TCR). The assembly of alpha-beta TR heterodimers with CD3 occurs in the endoplasmic reticulum where a single alpha-beta TR heterodimer associates with one CD3D-CD3E heterodimer, one CD3G-CD3E heterodimer and one CD247 homodimer forming a stable octameric structure. CD3D-CD3E and CD3G-CD3E heterodimers preferentially associate with TR alpha and TR beta chains, respectively. The association of the CD247 homodimer is the last step of TcR assembly in the endoplasmic reticulum and is required for transport to the cell surface.

Its subcellular location is the cell membrane. Its function is as follows. V region of the variable domain of T cell receptor (TR) beta chain that participates in the antigen recognition. Alpha-beta T cell receptors are antigen specific receptors which are essential to the immune response and are present on the cell surface of T lymphocytes. Recognize peptide-major histocompatibility (MH) (pMH) complexes that are displayed by antigen presenting cells (APC), a prerequisite for efficient T cell adaptive immunity against pathogens. Binding of alpha-beta TR to pMH complex initiates TR-CD3 clustering on the cell surface and intracellular activation of LCK that phosphorylates the ITAM motifs of CD3G, CD3D, CD3E and CD247 enabling the recruitment of ZAP70. In turn ZAP70 phosphorylates LAT, which recruits numerous signaling molecules to form the LAT signalosome. The LAT signalosome propagates signal branching to three major signaling pathways, the calcium, the mitogen-activated protein kinase (MAPK) kinase and the nuclear factor NF-kappa-B (NF-kB) pathways, leading to the mobilization of transcription factors that are critical for gene expression and essential for T cell growth and differentiation. The T cell repertoire is generated in the thymus, by V-(D)-J rearrangement. This repertoire is then shaped by intrathymic selection events to generate a peripheral T cell pool of self-MH restricted, non-autoaggressive T cells. Post-thymic interaction of alpha-beta TR with the pMH complexes shapes TR structural and functional avidity. The chain is T cell receptor beta variable 7-4 from Homo sapiens (Human).